The sequence spans 90 residues: Chaplin-G (90 aa).

The N-terminal stretch at 1–27 is a signal peptide; the sequence is MSRIAKAAGVALGTGAVVLSGTGMAMA. The region spanning 38–78 is the Chaplin domain; sequence SPGVLSGNVVQVPVHVPVNLCGNTIDVIGLLNPAFGNACEN. Residues cysteine 58 and cysteine 76 are joined by a disulfide bond.

It belongs to the chaplin family. Short chaplin subfamily.

It localises to the cell surface. The protein localises to the secreted. It is found in the cell wall. In terms of biological role, one of 8 partially redundant surface-active proteins required for efficient formation of aerial mycelium; the short chaplins assemble into a hydrophobic, amyloidal fibrillar surface layer that envelopes and protects aerial hyphae and spores, presumably anchored to the long chaplins. Chaplins have an overlapping function with the surface-active SapB peptide; chaplins are essential on minimal medium while on rich medium both chaplins and SapB are required for efficient aerial hyphae formation. Chaplins are also involved in cell attachment to a hydrophobic surface. Forms amyloid fibrils in vitro probably composed of stacked beta-sheets, at low extracellular concentrations individually restores the ability to form aerial hyphae to a chaplin-deficient strain. A small chaplin extract (ChpD, ChpE, ChpF, ChpG and ChpH) self-assembles into 2 different amyloids; small fibrils at the air-water interface form an amphipathic membrane that resembles spore-surface structures involved in aerial hyphae formation, and hydrophilic fibrils in solution that resemble the fibers that attach cells to a hydrophobic surface. At the air-water interface the hydrophilic surface is in contact with water (probably equivalent to the peptidoglycan layer), while the hydrophobic face is exposed to the air, making the surface of the aerial hyphae hydrophobic. A small chaplin extract applied to a chaplin-deficient strain restores aerial hyphae formation. The small chaplin extract forms an amyloid-like structure similar to that seen on the surface of cells without rodlets (rdlA-rdlB deletions), and is highly surface active, reducing surface tension from 72 to 26 mJ/m(2), which probably allows escape of hyphae from an aqueous environment into air. ChpF and ChpG are sufficient to restore the rodlet layer and hydrophobicity to a strain deleted for the other 6 chaplin genes. This Streptomyces coelicolor (strain ATCC BAA-471 / A3(2) / M145) protein is Chaplin-G.